Here is a 283-residue protein sequence, read N- to C-terminus: Pantothenate synthetase (283 aa).

ATP is bound at residue 30–37 (MGYLHEGH). The Proton donor role is filled by His-37. Residue Gln-61 coordinates (R)-pantoate. Gln-61 lines the beta-alanine pocket. 147-150 (GQKD) provides a ligand contact to ATP. Gln-153 provides a ligand contact to (R)-pantoate. ATP-binding positions include Val-176 and 184-187 (MSSR).

The protein belongs to the pantothenate synthetase family. In terms of assembly, homodimer.

It localises to the cytoplasm. It catalyses the reaction (R)-pantoate + beta-alanine + ATP = (R)-pantothenate + AMP + diphosphate + H(+). Its pathway is cofactor biosynthesis; (R)-pantothenate biosynthesis; (R)-pantothenate from (R)-pantoate and beta-alanine: step 1/1. In terms of biological role, catalyzes the condensation of pantoate with beta-alanine in an ATP-dependent reaction via a pantoyl-adenylate intermediate. The protein is Pantothenate synthetase of Thermoanaerobacter sp. (strain X514).